A 506-amino-acid polypeptide reads, in one-letter code: Protein MGF 505-4R (506 aa).

This sequence belongs to the asfivirus MGF 505 family.

Plays a role in virus cell tropism, and may be required for efficient virus replication in macrophages. In Ornithodoros (relapsing fever ticks), this protein is Protein MGF 505-4R.